Here is a 268-residue protein sequence, read N- to C-terminus: Small ribosomal subunit protein uS2 (268 aa).

Residues 228-268 are disordered; it reads QLDSEQDYEDFDESISDEYDDYEDEEEYEEQDLEVDASEDE. The span at 231–268 shows a compositional bias: acidic residues; that stretch reads SEQDYEDFDESISDEYDDYEDEEEYEEQDLEVDASEDE.

It belongs to the universal ribosomal protein uS2 family.

The sequence is that of Small ribosomal subunit protein uS2 from Rippkaea orientalis (strain PCC 8801 / RF-1) (Cyanothece sp. (strain PCC 8801)).